Reading from the N-terminus, the 118-residue chain is MARVKRGVVARARHKKILKQAKGYYGARSRVYRVAFQAVIKAGQYAYRDRRQRKRQFRQLWIARINAAARQNGISYSKFINGLKKASVEIDRKILADIAVFDKLAFTALVEKAKAALA.

It belongs to the bacterial ribosomal protein bL20 family.

In terms of biological role, binds directly to 23S ribosomal RNA and is necessary for the in vitro assembly process of the 50S ribosomal subunit. It is not involved in the protein synthesizing functions of that subunit. The polypeptide is Large ribosomal subunit protein bL20 (Enterobacter sp. (strain 638)).